Consider the following 439-residue polypeptide: MLICLTASHHNASFEVLEKLSVAAPSVAGALMEQNDFIAGAVVLATCNRFEAYLDVEEPLTAARALAVEATVDVVSGASGIARDDVRGSVDVKCGDAVAEHLFAVSSGLESVVVGEGEIAGQVRRALEGARTGGTTSTGLERLFQTASNTSRGVKTRTGLQSAGRSMVRLALDLAESRIADWSATRVLLVGTGAYAGASLAALRDRGVVDVHVYSPSGRAQKFAGPHGIPAVEGRDLLRALAASDMVVTCSTAPTAVLAAHHMQGAAAVSGDGRRRLVIDLGLPRNVDPDVVTVDGVELLDLETISLHAPLRDLTATDDAREIVSTAAAEFRAASAEDEVAPAVVALRTHIFDVLEGELERVRKRGDSSDATEKALRHLVSVLVHQPSVRARELARQGEGARVVDAVQALFGLDVEMPAAVSSPVAVALSRTAEAGQAS.

Substrate contacts are provided by residues 46–49 (TCNR), serine 111, 116–118 (EGE), and glutamine 122. The Nucleophile role is filled by cysteine 47. An NADP(+)-binding site is contributed by 191–196 (GTGAYA).

This sequence belongs to the glutamyl-tRNA reductase family. Homodimer.

It catalyses the reaction (S)-4-amino-5-oxopentanoate + tRNA(Glu) + NADP(+) = L-glutamyl-tRNA(Glu) + NADPH + H(+). The protein operates within porphyrin-containing compound metabolism; protoporphyrin-IX biosynthesis; 5-aminolevulinate from L-glutamyl-tRNA(Glu): step 1/2. In terms of biological role, catalyzes the NADPH-dependent reduction of glutamyl-tRNA(Glu) to glutamate 1-semialdehyde (GSA). The polypeptide is Glutamyl-tRNA reductase (Clavibacter michiganensis subsp. michiganensis (strain NCPPB 382)).